The sequence spans 480 residues: Ribulose bisphosphate carboxylase large chain (480 aa).

Positions 1–2 are excised as a propeptide; that stretch reads MS. Position 3 is an N-acetylproline (proline 3). An N6,N6,N6-trimethyllysine modification is found at lysine 14. Positions 123 and 173 each coordinate substrate. Lysine 175 functions as the Proton acceptor in the catalytic mechanism. Substrate is bound at residue lysine 177. Positions 201, 203, and 204 each coordinate Mg(2+). Position 201 is an N6-carboxylysine (lysine 201). The active-site Proton acceptor is the histidine 294. Substrate is bound by residues arginine 295, histidine 327, and serine 379.

Belongs to the RuBisCO large chain family. Type I subfamily. Heterohexadecamer of 8 large chains and 8 small chains; disulfide-linked. The disulfide link is formed within the large subunit homodimers. Requires Mg(2+) as cofactor. The disulfide bond which can form in the large chain dimeric partners within the hexadecamer appears to be associated with oxidative stress and protein turnover.

The protein resides in the plastid. It localises to the chloroplast. It carries out the reaction 2 (2R)-3-phosphoglycerate + 2 H(+) = D-ribulose 1,5-bisphosphate + CO2 + H2O. The catalysed reaction is D-ribulose 1,5-bisphosphate + O2 = 2-phosphoglycolate + (2R)-3-phosphoglycerate + 2 H(+). In terms of biological role, ruBisCO catalyzes two reactions: the carboxylation of D-ribulose 1,5-bisphosphate, the primary event in carbon dioxide fixation, as well as the oxidative fragmentation of the pentose substrate in the photorespiration process. Both reactions occur simultaneously and in competition at the same active site. The polypeptide is Ribulose bisphosphate carboxylase large chain (Phalaenopsis aphrodite subsp. formosana (Moth orchid)).